A 118-amino-acid polypeptide reads, in one-letter code: Large ribosomal subunit protein bL20 (118 aa).

This sequence belongs to the bacterial ribosomal protein bL20 family.

In terms of biological role, binds directly to 23S ribosomal RNA and is necessary for the in vitro assembly process of the 50S ribosomal subunit. It is not involved in the protein synthesizing functions of that subunit. This Campylobacter curvus (strain 525.92) protein is Large ribosomal subunit protein bL20.